Reading from the N-terminus, the 279-residue chain is Malonyl-[acyl-carrier protein] O-methyltransferase (279 aa).

The protein belongs to the methyltransferase superfamily.

It carries out the reaction malonyl-[ACP] + S-adenosyl-L-methionine = malonyl-[ACP] methyl ester + S-adenosyl-L-homocysteine. Its pathway is cofactor biosynthesis; biotin biosynthesis. Functionally, converts the free carboxyl group of a malonyl-thioester to its methyl ester by transfer of a methyl group from S-adenosyl-L-methionine (SAM). It allows to synthesize pimeloyl-ACP via the fatty acid synthetic pathway. This chain is Malonyl-[acyl-carrier protein] O-methyltransferase, found in Hahella chejuensis (strain KCTC 2396).